We begin with the raw amino-acid sequence, 135 residues long: DNA-directed RNA polymerase subunit omega (135 aa).

The tract at residues 107-135 (ASQESQDYEVDGEIDDEINDQDGDEEVSV) is disordered. Residues 112–135 (QDYEVDGEIDDEINDQDGDEEVSV) show a composition bias toward acidic residues.

The protein belongs to the RNA polymerase subunit omega family. The RNAP catalytic core consists of 2 alpha, 1 beta, 1 beta' and 1 omega subunit. When a sigma factor is associated with the core the holoenzyme is formed, which can initiate transcription.

It catalyses the reaction RNA(n) + a ribonucleoside 5'-triphosphate = RNA(n+1) + diphosphate. Promotes RNA polymerase assembly. Latches the N- and C-terminal regions of the beta' subunit thereby facilitating its interaction with the beta and alpha subunits. The sequence is that of DNA-directed RNA polymerase subunit omega from Wolbachia pipientis wMel.